The sequence spans 255 residues: Cullin-like protein 3 (255 aa).

Belongs to the cullin family.

The polypeptide is Cullin-like protein 3 (Arabidopsis thaliana (Mouse-ear cress)).